Reading from the N-terminus, the 395-residue chain is 8-amino-7-oxononanoate synthase (395 aa).

R24 lines the substrate pocket. 111 to 112 contributes to the pyridoxal 5'-phosphate binding site; the sequence is GF. Substrate is bound at residue H136. Pyridoxal 5'-phosphate is bound by residues S184, 209–212, and 240–243; these read DDAH and TLSK. K243 carries the N6-(pyridoxal phosphate)lysine modification. T357 lines the substrate pocket.

The protein belongs to the class-II pyridoxal-phosphate-dependent aminotransferase family. BioF subfamily. In terms of assembly, homodimer. Pyridoxal 5'-phosphate is required as a cofactor.

The catalysed reaction is 6-carboxyhexanoyl-[ACP] + L-alanine + H(+) = (8S)-8-amino-7-oxononanoate + holo-[ACP] + CO2. It participates in cofactor biosynthesis; biotin biosynthesis. Its function is as follows. Catalyzes the decarboxylative condensation of pimeloyl-[acyl-carrier protein] and L-alanine to produce 8-amino-7-oxononanoate (AON), [acyl-carrier protein], and carbon dioxide. The sequence is that of 8-amino-7-oxononanoate synthase from Thermoanaerobacter pseudethanolicus (strain ATCC 33223 / 39E) (Clostridium thermohydrosulfuricum).